Here is a 181-residue protein sequence, read N- to C-terminus: UPF0301 protein MXAN_2022 (181 aa).

It belongs to the UPF0301 (AlgH) family.

This is UPF0301 protein MXAN_2022 from Myxococcus xanthus (strain DK1622).